The primary structure comprises 311 residues: Tricarboxylate transport protein, mitochondrial (311 aa).

A propeptide spans 1-13 (MAAPRAPRALTAA) (removed in mature form). Solcar repeat units follow at residues 23-111 (THPG…LSNH), 122-208 (RRGL…LRNW), and 218-303 (MNPL…VVKL). 3 helical membrane passes run 29-46 (ILAG…TFPT), 86-105 (GLSS…FGMF), and 129-143 (LGAG…VCPM). Position 156 is a phosphoserine (Ser-156). The next 3 helical transmembrane spans lie at 183 to 202 (GLTA…FFVM), 224 to 241 (GVFG…NTPL), and 278 to 297 (GTVP…FVIY).

It belongs to the mitochondrial carrier (TC 2.A.29) family. Post-translationally, possesses a short cleavable presequence, which, however, is found to be dispensable both for targeting to mitochondria and insertion into the inner membrane. However, the presequence is required to keep SLC25A1 in a soluble state and thus in an import-competent state. Mature SLC25A1 lacking the presequence is prone to aggregation.

The protein localises to the mitochondrion inner membrane. It carries out the reaction (S)-malate(in) + citrate(out) = (S)-malate(out) + citrate(in). It catalyses the reaction citrate(out) + succinate(in) = citrate(in) + succinate(out). The catalysed reaction is D-threo-isocitrate(in) + citrate(out) = D-threo-isocitrate(out) + citrate(in). The enzyme catalyses cis-aconitate(in) + citrate(out) = cis-aconitate(out) + citrate(in). It carries out the reaction trans-aconitate(in) + citrate(out) = trans-aconitate(out) + citrate(in). It catalyses the reaction phosphoenolpyruvate(in) + citrate(out) = phosphoenolpyruvate(out) + citrate(in). The catalysed reaction is maleate(in) + citrate(out) = maleate(out) + citrate(in). In terms of biological role, mitochondrial electroneutral antiporter that exports citrate from the mitochondria into the cytosol in exchange for malate. Also able to mediate the exchange of citrate for isocitrate, phosphoenolpyruvate, cis-aconitate and to a lesser extent trans-aconitate, maleate and succinate. In the cytoplasm, citrate plays important roles in fatty acid and sterol synthesis, regulation of glycolysis, protein acetylation, and other physiopathological processes. The chain is Tricarboxylate transport protein, mitochondrial (Slc25a1) from Rattus norvegicus (Rat).